A 307-amino-acid chain; its full sequence is UDP-N-acetylenolpyruvoylglucosamine reductase (307 aa).

Residues 21-183 enclose the FAD-binding PCMH-type domain; that stretch reads RVGGPADLFF…TEVVMEGPPG (163 aa). R163 is a catalytic residue. The span at 200-209 shows a compositional bias: basic and acidic residues; that stretch reads EATQPTKDRT. The tract at residues 200-227 is disordered; that stretch reads EATQPTKDRTAGSTFRNPAGFSSTGRAD. The span at 210–224 shows a compositional bias: polar residues; that stretch reads AGSTFRNPAGFSSTG. Residue S212 is the Proton donor of the active site. The active site involves E294.

It belongs to the MurB family. Requires FAD as cofactor.

It is found in the cytoplasm. It catalyses the reaction UDP-N-acetyl-alpha-D-muramate + NADP(+) = UDP-N-acetyl-3-O-(1-carboxyvinyl)-alpha-D-glucosamine + NADPH + H(+). Its pathway is cell wall biogenesis; peptidoglycan biosynthesis. Cell wall formation. This Dinoroseobacter shibae (strain DSM 16493 / NCIMB 14021 / DFL 12) protein is UDP-N-acetylenolpyruvoylglucosamine reductase.